Reading from the N-terminus, the 293-residue chain is 4-diphosphocytidyl-2-C-methyl-D-erythritol kinase (293 aa).

The active site involves Lys16. Residue 99-109 coordinates ATP; sequence PMGAGLGGGSS. Residue Asp141 is part of the active site.

The protein belongs to the GHMP kinase family. IspE subfamily.

The catalysed reaction is 4-CDP-2-C-methyl-D-erythritol + ATP = 4-CDP-2-C-methyl-D-erythritol 2-phosphate + ADP + H(+). Its pathway is isoprenoid biosynthesis; isopentenyl diphosphate biosynthesis via DXP pathway; isopentenyl diphosphate from 1-deoxy-D-xylulose 5-phosphate: step 3/6. Functionally, catalyzes the phosphorylation of the position 2 hydroxy group of 4-diphosphocytidyl-2C-methyl-D-erythritol. This Burkholderia pseudomallei (strain 668) protein is 4-diphosphocytidyl-2-C-methyl-D-erythritol kinase.